The chain runs to 211 residues: Urease accessory protein UreG (211 aa).

Residue 11–18 (GPVGAGKT) participates in GTP binding.

Belongs to the SIMIBI class G3E GTPase family. UreG subfamily. As to quaternary structure, homodimer. UreD, UreF and UreG form a complex that acts as a GTP-hydrolysis-dependent molecular chaperone, activating the urease apoprotein by helping to assemble the nickel containing metallocenter of UreC. The UreE protein probably delivers the nickel.

It is found in the cytoplasm. Functionally, facilitates the functional incorporation of the urease nickel metallocenter. This process requires GTP hydrolysis, probably effectuated by UreG. In Actinobacillus pleuropneumoniae serotype 7 (strain AP76), this protein is Urease accessory protein UreG.